Consider the following 142-residue polypeptide: Midkine-A (142 aa).

A signal peptide spans 1–20 (MELRAFCVILLITVLAVSSQ). 5 disulfides stabilise this stretch: Cys36–Cys60, Cys44–Cys69, Cys51–Cys73, Cys83–Cys115, and Cys93–Cys125.

The protein belongs to the pleiotrophin family. Expression at the mid-gastrula stage begins in the neural anlage, and becomes increasingly prominent in the central nervous system and head mesenchyme during neurula stages. Although the mRNA is localized to the developing central nervous system (CNS), the protein is deposited at the neuromuscular junction (NMJ). In the tailbud stage embryo, expressed in the head and tail regions as well as in the CNS. In adults, expression is highest in the brain, eye and bone, with lower expression in the heart and lung. Not expressed in the ovary.

Its subcellular location is the secreted. In terms of biological role, secreted protein that functions as a cytokine and growth factor and mediates its signal through cell-surface proteoglycan and non-proteoglycan receptors. Binds cell-surface proteoglycan receptors via their chondroitin sulfate (CS) groups. Thereby regulates many processes like inflammatory response, cell proliferation, cell adhesion, cell growth, cell survival, tissue regeneration, cell differentiation and cell migration. Inhibits mesoderm formation and promotes neural formation during development. Plays a role in development of the neuromuscular junction (NMJ). Has antibacterial activity against both Gram-positive and Gram-negative bacteria. This is Midkine-A (mdk-a) from Xenopus laevis (African clawed frog).